The following is a 240-amino-acid chain: Ribonuclease 3 (240 aa).

The RNase III domain occupies 9 to 141; it reads VEEFQKETGI…LLAAIYLDQG (133 aa). A Mg(2+)-binding site is contributed by E54. D58 is a catalytic residue. 2 residues coordinate Mg(2+): D127 and E130. E130 is a catalytic residue. One can recognise a DRBM domain in the interval 168–237; it reads DYKTALQEIV…ARIAYEKLLK (70 aa).

It belongs to the ribonuclease III family. As to quaternary structure, homodimer. Mg(2+) serves as cofactor.

Its subcellular location is the cytoplasm. The catalysed reaction is Endonucleolytic cleavage to 5'-phosphomonoester.. Its function is as follows. Digests double-stranded RNA. Involved in the processing of primary rRNA transcript to yield the immediate precursors to the large and small rRNAs (23S and 16S). Also processes some mRNAs, and tRNAs when they are encoded in the rRNA operon. Probably processes pre-crRNA and tracrRNA of type II CRISPR loci if present in the organism. In Thermotoga maritima (strain ATCC 43589 / DSM 3109 / JCM 10099 / NBRC 100826 / MSB8), this protein is Ribonuclease 3 (rnc).